A 116-amino-acid chain; its full sequence is Large ribosomal subunit protein uL18 (116 aa).

It belongs to the universal ribosomal protein uL18 family. In terms of assembly, part of the 50S ribosomal subunit; part of the 5S rRNA/L5/L18/L25 subcomplex. Contacts the 5S and 23S rRNAs.

Functionally, this is one of the proteins that bind and probably mediate the attachment of the 5S RNA into the large ribosomal subunit, where it forms part of the central protuberance. The polypeptide is Large ribosomal subunit protein uL18 (Acinetobacter baylyi (strain ATCC 33305 / BD413 / ADP1)).